The chain runs to 530 residues: GMP synthase [glutamine-hydrolyzing] (530 aa).

A Glutamine amidotransferase type-1 domain is found at 4–205 (RILILDYGSQ…VKDICGCEGD (202 aa)). The active-site Nucleophile is Cys-84. Active-site residues include His-179 and Glu-181. The GMPS ATP-PPase domain occupies 206–398 (WNMPDYISEA…LGLPPQMVYR (193 aa)). ATP is bound at residue 233–239 (SGGVDSL).

As to quaternary structure, homodimer.

The enzyme catalyses XMP + L-glutamine + ATP + H2O = GMP + L-glutamate + AMP + diphosphate + 2 H(+). Its pathway is purine metabolism; GMP biosynthesis; GMP from XMP (L-Gln route): step 1/1. Catalyzes the synthesis of GMP from XMP. The sequence is that of GMP synthase [glutamine-hydrolyzing] from Bordetella parapertussis (strain 12822 / ATCC BAA-587 / NCTC 13253).